The primary structure comprises 365 residues: MAGVWAPEHSVEAHSNQSSAADGCGSVSVAFPITMMVTGFVGNALAMLLVVRSYRRRESKRKKSFLLCIGWLALTDLVGQLLTSPVVILVYLSQRRWEQLDPSGRLCTFFGLTMTVFGLSSLLVASAMAVERALAIRAPHWYASHMKTRATPVLLGVWLSVLAFALLPVLGVGRYSVQWPGTWCFISTGPAGNETDSAREPGSVAFASAFACLGLLALVVTFACNLATIKALVSRCRAKAAASQSSAQWGRITTETAIQLMGIMCVLSVCWSPLLIMMLKMIFNQMSVEQCKTQMGKEKECNSFLIAVRLASLNQILDPWVYLLLRKILLRKFCQIRDHTNYASSSTSLPCPGSSVLMWSDQLER.

Over 1–30 (MAGVWAPEHSVEAHSNQSSAADGCGSVSVA) the chain is Extracellular. A glycan (N-linked (GlcNAc...) asparagine) is linked at asparagine 16. Residues 31-55 (FPITMMVTGFVGNALAMLLVVRSYR) traverse the membrane as a helical segment. At 56–68 (RRESKRKKSFLLC) the chain is on the cytoplasmic side. A helical transmembrane segment spans residues 69–89 (IGWLALTDLVGQLLTSPVVIL). Residues 90-108 (VYLSQRRWEQLDPSGRLCT) lie on the Extracellular side of the membrane. Cysteine 107 and cysteine 184 are disulfide-bonded. A helical transmembrane segment spans residues 109–130 (FFGLTMTVFGLSSLLVASAMAV). Residues 131-151 (ERALAIRAPHWYASHMKTRAT) lie on the Cytoplasmic side of the membrane. A helical membrane pass occupies residues 152–173 (PVLLGVWLSVLAFALLPVLGVG). Over 174–203 (RYSVQWPGTWCFISTGPAGNETDSAREPGS) the chain is Extracellular. Asparagine 193 carries N-linked (GlcNAc...) asparagine glycosylation. The helical transmembrane segment at 204 to 229 (VAFASAFACLGLLALVVTFACNLATI) threads the bilayer. The Cytoplasmic segment spans residues 230-259 (KALVSRCRAKAAASQSSAQWGRITTETAIQ). Residues 260–283 (LMGIMCVLSVCWSPLLIMMLKMIF) traverse the membrane as a helical segment. At 284–303 (NQMSVEQCKTQMGKEKECNS) the chain is on the extracellular side. A helical transmembrane segment spans residues 304–325 (FLIAVRLASLNQILDPWVYLLL). At 326–365 (RKILLRKFCQIRDHTNYASSSTSLPCPGSSVLMWSDQLER) the chain is on the cytoplasmic side.

The protein belongs to the G-protein coupled receptor 1 family. In terms of assembly, interacts (via C-terminus) with MKLN1. Does not interact with MKLN1. As to expression, principally expressed in the tubules of the renal medulla. Specific expression is seen in medullary and cortical thick ascending limbs; lower levels are detected in cortical and inner medullary collecting ducts. Not detected significantly in the glomeruli. In the brain, expressed in all types of glial cells.

It localises to the cell membrane. Its function is as follows. Receptor for prostaglandin E2 (PGE2). Required for normal development of fever in response to pyrinogens, including IL1B, prostaglandin E2 and bacterial lipopolysaccharide (LPS). Required for normal potentiation of platelet aggregation by prostaglandin E2, and thus plays a role in the regulation of blood coagulation. Required for increased HCO3(-) secretion in the duodenum in response to mucosal acidification, and thereby contributes to the protection of the mucosa against acid-induced ulceration. Not required for normal kidney function, normal urine volume and osmolality. Functionally, receptor for prostaglandin E2 (PGE2); ligand binding activates a signaling cascade via G(i) proteins that leads to the inhibition of adenylate cyclase. In terms of biological role, receptor for prostaglandin E2 (PGE2); ligand binding can activate several distinct signaling cascades, resulting in activation or inhibition of adenylate cyclase. The sequence is that of Prostaglandin E2 receptor EP3 subtype (Ptger3) from Rattus norvegicus (Rat).